Here is a 414-residue protein sequence, read N- to C-terminus: Serine hydroxymethyltransferase (414 aa).

(6S)-5,6,7,8-tetrahydrofolate contacts are provided by residues Leu-118 and 122–124 (GHL). N6-(pyridoxal phosphate)lysine is present on Lys-226. Residue 353 to 355 (SPF) coordinates (6S)-5,6,7,8-tetrahydrofolate.

The protein belongs to the SHMT family. In terms of assembly, homodimer. Requires pyridoxal 5'-phosphate as cofactor.

Its subcellular location is the cytoplasm. It carries out the reaction (6R)-5,10-methylene-5,6,7,8-tetrahydrofolate + glycine + H2O = (6S)-5,6,7,8-tetrahydrofolate + L-serine. It participates in one-carbon metabolism; tetrahydrofolate interconversion. The protein operates within amino-acid biosynthesis; glycine biosynthesis; glycine from L-serine: step 1/1. Catalyzes the reversible interconversion of serine and glycine with tetrahydrofolate (THF) serving as the one-carbon carrier. This reaction serves as the major source of one-carbon groups required for the biosynthesis of purines, thymidylate, methionine, and other important biomolecules. Also exhibits THF-independent aldolase activity toward beta-hydroxyamino acids, producing glycine and aldehydes, via a retro-aldol mechanism. The sequence is that of Serine hydroxymethyltransferase from Blochmanniella floridana.